Consider the following 367-residue polypeptide: Probable outer membrane usher protein LpfC (367 aa).

Residues methionine 1–alanine 30 form the signal peptide.

The protein belongs to the fimbrial export usher family.

Its subcellular location is the cell outer membrane. Functionally, part of the lpfABCC'DE fimbrial operon. LP fimbriae may participate in the interaction with eukaryotic cells by assisting in microcolony formation. Could be involved in the export and assembly of the fimbrial subunits across the outer membrane. The protein is Probable outer membrane usher protein LpfC (lpfC) of Escherichia coli O157:H7.